The chain runs to 985 residues: Regulator of telomere elongation helicase 1 homolog (985 aa).

The 297-residue stretch at 7–303 (AGIPVHFPFE…QDMGGDEPKD (297 aa)) folds into the Helicase ATP-binding domain. Residue 42–49 (SPTGTGKT) coordinates ATP. [4Fe-4S] cluster contacts are provided by C146, C164, C173, and C209. Residues 252 to 255 (DEAH) carry the DEAH box motif. The segment at 858–884 (GSSGMVKIHKRERSSPTQPESSSQVSK) is disordered. Positions 872–882 (SPTQPESSSQV) are enriched in polar residues. Phosphothreonine is present on T874.

It belongs to the helicase family. RAD3/XPD subfamily.

Its subcellular location is the nucleus. The enzyme catalyses ATP + H2O = ADP + phosphate + H(+). Its function is as follows. A probable ATP-dependent DNA helicase implicated in DNA repair and the maintenance of genomic stability. Acts as an anti-recombinase to counteract toxic recombination and limit crossover during meiosis. Regulates meiotic recombination and crossover homeostasis by physically dissociating strand invasion events and thereby promotes noncrossover repair by meiotic synthesis dependent strand annealing (SDSA) as well as disassembly of D loop recombination intermediates. This chain is Regulator of telomere elongation helicase 1 homolog, found in Drosophila yakuba (Fruit fly).